The sequence spans 495 residues: ATP synthase subunit beta, chloroplastic (495 aa).

Position 172–179 (172–179 (GGAGVGKT)) interacts with ATP.

It belongs to the ATPase alpha/beta chains family. In terms of assembly, F-type ATPases have 2 components, CF(1) - the catalytic core - and CF(0) - the membrane proton channel. CF(1) has five subunits: alpha(3), beta(3), gamma(1), delta(1), epsilon(1). CF(0) has four main subunits: a(1), b(1), b'(1) and c(9-12).

Its subcellular location is the plastid. The protein resides in the chloroplast thylakoid membrane. The enzyme catalyses ATP + H2O + 4 H(+)(in) = ADP + phosphate + 5 H(+)(out). Produces ATP from ADP in the presence of a proton gradient across the membrane. The catalytic sites are hosted primarily by the beta subunits. The chain is ATP synthase subunit beta, chloroplastic from Brimeura amethystina (Spanish hyacinth).